The primary structure comprises 271 residues: Tryptophan synthase alpha chain (271 aa).

Active-site proton acceptor residues include Glu49 and Asp60.

Belongs to the TrpA family. Tetramer of two alpha and two beta chains.

The catalysed reaction is (1S,2R)-1-C-(indol-3-yl)glycerol 3-phosphate + L-serine = D-glyceraldehyde 3-phosphate + L-tryptophan + H2O. Its pathway is amino-acid biosynthesis; L-tryptophan biosynthesis; L-tryptophan from chorismate: step 5/5. The alpha subunit is responsible for the aldol cleavage of indoleglycerol phosphate to indole and glyceraldehyde 3-phosphate. This chain is Tryptophan synthase alpha chain, found in Burkholderia lata (strain ATCC 17760 / DSM 23089 / LMG 22485 / NCIMB 9086 / R18194 / 383).